The sequence spans 151 residues: Putative pre-16S rRNA nuclease (151 aa).

It belongs to the YqgF nuclease family.

It is found in the cytoplasm. Could be a nuclease involved in processing of the 5'-end of pre-16S rRNA. The polypeptide is Putative pre-16S rRNA nuclease (Neisseria gonorrhoeae (strain ATCC 700825 / FA 1090)).